Consider the following 256-residue polypeptide: Acetyl-coenzyme A carboxylase carboxyl transferase subunit alpha (256 aa).

Residues 1-236 (MSDVARILKE…KTAIVDELAE (236 aa)) enclose the CoA carboxyltransferase C-terminal domain.

The protein belongs to the AccA family. Acetyl-CoA carboxylase is a heterohexamer composed of biotin carboxyl carrier protein (AccB), biotin carboxylase (AccC) and two subunits each of ACCase subunit alpha (AccA) and ACCase subunit beta (AccD).

The protein resides in the cytoplasm. It catalyses the reaction N(6)-carboxybiotinyl-L-lysyl-[protein] + acetyl-CoA = N(6)-biotinyl-L-lysyl-[protein] + malonyl-CoA. It participates in lipid metabolism; malonyl-CoA biosynthesis; malonyl-CoA from acetyl-CoA: step 1/1. Component of the acetyl coenzyme A carboxylase (ACC) complex. First, biotin carboxylase catalyzes the carboxylation of biotin on its carrier protein (BCCP) and then the CO(2) group is transferred by the carboxyltransferase to acetyl-CoA to form malonyl-CoA. In Streptococcus thermophilus (strain CNRZ 1066), this protein is Acetyl-coenzyme A carboxylase carboxyl transferase subunit alpha.